We begin with the raw amino-acid sequence, 49 residues long: Large ribosomal subunit protein bL33A (49 aa).

This sequence belongs to the bacterial ribosomal protein bL33 family.

The sequence is that of Large ribosomal subunit protein bL33A from Mycoplasmopsis agalactiae (strain NCTC 10123 / CIP 59.7 / PG2) (Mycoplasma agalactiae).